We begin with the raw amino-acid sequence, 510 residues long: MIWHVQNENFILDSTRIFMKAFHLLLFNGSFIFPECILIFGLILLLMIDSTSDQKDRPWFYFISSTSLVMSITALLFRWKEEPIISFSGNFQTNNFNEIFQFLILLCSTLCIPLSVEYIECTEMAITEFLLFVLTATLGGMFLCGANDLITIFVAPECFSLCSYLLSGYTKRDVRSNEATTKYLLMGGASSSILVHGFSWLYGSSGGEIELQEIVNGLINTQMYNSPGISIALISITVGIGFKLSPAPFHQWTPDVYEGSPTPVVAFLSVTSKVAASASATRIFDIPFYFSSNEWHLLLEILAILSMILGNLIAITQTSMKRMLAYSSIGQIGYVIIGIIVGDSNNGYASMITYMLFYISMNLGTFARIVSFGLRTGTDNIRDYAGLYTKDPFLALSSALCLLSLGGLPPLAGFFGKLHLFWCGWQAGLYFLVSIGLLTSVVSIYYYLKIIKLLMTGRNQEITPHVRNYRRSPLRSNNSIEWSMTVCVIASTIPGISMNPILAIAQDTLF.

The next 12 helical transmembrane spans lie at leucine 24–leucine 44, tryptophan 59–tryptophan 79, isoleucine 99–isoleucine 119, methionine 124–cysteine 144, leucine 149–tyrosine 169, tyrosine 183–glycine 203, isoleucine 229–phenylalanine 249, tryptophan 295–isoleucine 315, methionine 323–aspartate 343, glycine 347–alanine 367, alanine 395–phenylalanine 415, and leucine 418–leucine 438.

Belongs to the complex I subunit 2 family. NDH is composed of at least 16 different subunits, 5 of which are encoded in the nucleus.

It is found in the plastid. It localises to the chloroplast thylakoid membrane. The catalysed reaction is a plastoquinone + NADH + (n+1) H(+)(in) = a plastoquinol + NAD(+) + n H(+)(out). It catalyses the reaction a plastoquinone + NADPH + (n+1) H(+)(in) = a plastoquinol + NADP(+) + n H(+)(out). NDH shuttles electrons from NAD(P)H:plastoquinone, via FMN and iron-sulfur (Fe-S) centers, to quinones in the photosynthetic chain and possibly in a chloroplast respiratory chain. The immediate electron acceptor for the enzyme in this species is believed to be plastoquinone. Couples the redox reaction to proton translocation, and thus conserves the redox energy in a proton gradient. The chain is NAD(P)H-quinone oxidoreductase subunit 2, chloroplastic from Allium textile (Textile onion).